An 84-amino-acid polypeptide reads, in one-letter code: Cell division topological specificity factor (84 aa).

The protein belongs to the MinE family.

Functionally, prevents the cell division inhibition by proteins MinC and MinD at internal division sites while permitting inhibition at polar sites. This ensures cell division at the proper site by restricting the formation of a division septum at the midpoint of the long axis of the cell. The protein is Cell division topological specificity factor of Pseudomonas fluorescens (strain SBW25).